A 545-amino-acid polypeptide reads, in one-letter code: Lysine--tRNA ligase (545 aa).

The 'HIGH' region signature appears at 41–49; the sequence is PSGVPHLGH. Residues 306-310 carry the 'KMSKS' region motif; that stretch reads ALSSS.

Belongs to the class-I aminoacyl-tRNA synthetase family.

It localises to the cytoplasm. The catalysed reaction is tRNA(Lys) + L-lysine + ATP = L-lysyl-tRNA(Lys) + AMP + diphosphate. The protein is Lysine--tRNA ligase of Natronomonas pharaonis (strain ATCC 35678 / DSM 2160 / CIP 103997 / JCM 8858 / NBRC 14720 / NCIMB 2260 / Gabara) (Halobacterium pharaonis).